Here is a 23-residue protein sequence, read N- to C-terminus: Benzaldehyde dehydrogenase [NAD(+)] I (23 aa).

This sequence belongs to the aldehyde dehydrogenase family. Homotetramer.

It carries out the reaction benzaldehyde + NAD(+) + H2O = benzoate + NADH + 2 H(+). The sequence is that of Benzaldehyde dehydrogenase [NAD(+)] I from Acinetobacter guillouiae (Acinetobacter genomosp. 11).